Reading from the N-terminus, the 118-residue chain is V-type proton ATPase subunit G 2 (118 aa).

Positions 25–90 (ARKRKARRLK…VQGMQSSQQR (66 aa)) are disordered. Residues 35-56 (QAKEEAQMEVEQYRREREHEFQ) show a composition bias toward basic and acidic residues. Polar residues-rich tracts occupy residues 57 to 69 (SKQQAAMGSQGNL) and 78 to 89 (RRQVQGMQSSQQ).

The protein belongs to the V-ATPase G subunit family. In terms of assembly, V-ATPase is a heteromultimeric enzyme made up of two complexes: the ATP-hydrolytic V1 complex and the proton translocation V0 complex. The V1 complex consists of three catalytic AB heterodimers that form a heterohexamer, three peripheral stalks each consisting of EG heterodimers, one central rotor including subunits D and F, and the regulatory subunits C and H. The proton translocation complex V0 consists of the proton transport subunit a, a ring of proteolipid subunits c9c'', rotary subunit d, subunits e and f, and the accessory subunits ATP6AP1/Ac45 and ATP6AP2/PRR. In terms of tissue distribution, brain.

The protein localises to the melanosome. The protein resides in the cytoplasmic vesicle. It localises to the clathrin-coated vesicle membrane. In terms of biological role, subunit of the V1 complex of vacuolar(H+)-ATPase (V-ATPase), a multisubunit enzyme composed of a peripheral complex (V1) that hydrolyzes ATP and a membrane integral complex (V0) that translocates protons. V-ATPase is responsible for acidifying and maintaining the pH of intracellular compartments and in some cell types, is targeted to the plasma membrane, where it is responsible for acidifying the extracellular environment. This is V-type proton ATPase subunit G 2 (ATP6V1G2) from Homo sapiens (Human).